The sequence spans 998 residues: Calcium-transporting ATPase 3, endoplasmic reticulum-type (998 aa).

Topologically, residues 1–48 are cytoplasmic; that stretch reads MEDAYARSVSEVLDFFGVDPTKGLSDSQVVHHSRLYGRNVLPEEKRTP. The helical transmembrane segment at 49–69 threads the bilayer; sequence FWKLVLKQFDDLLVKILIVAA. Residues 70–89 are Lumenal-facing; the sequence is IVSFVLALANGETGLTAFLE. The chain crosses the membrane as a helical span at residues 90-109; it reads PFVILLILAANAAVGVITET. The Cytoplasmic portion of the chain corresponds to 110-250; it reads NAEKALEELR…DEATPLKKKL (141 aa). A helical membrane pass occupies residues 251–270; that stretch reads DEFGSFLAKVIAGICVLVWV. Residues 271–291 lie on the Lumenal side of the membrane; it reads VNIGHFSDPSHGGFFKGAIHY. Residues 292-309 traverse the membrane as a helical segment; sequence FKIAVALAVAAIPEGLPA. 4 residues coordinate Ca(2+): V300, A301, I303, and E305. Topologically, residues 310–746 are cytoplasmic; it reads VVTTCLALGT…AEGRAIYNNT (437 aa). The active-site 4-aspartylphosphate intermediate is the D347. Residues D692 and D696 each coordinate Mg(2+). The helical transmembrane segment at 747–766 threads the bilayer; sequence KQFIRYMISSNIGEVVCIFV. 2 residues coordinate Ca(2+): N757 and E760. Over 767–776 the chain is Lumenal; the sequence is AAVLGIPDTL. A helical membrane pass occupies residues 777 to 797; the sequence is APVQLLWVNLVTDGLPATAIG. Residues N785, T788, and D789 each coordinate Ca(2+). Over 798–817 the chain is Cytoplasmic; it reads FNKQDSDVMKAKPRKVGEAV. Residues 818–840 traverse the membrane as a helical segment; it reads VTGWLFFRYLVIGVYVGLATVAG. The Lumenal portion of the chain corresponds to 841–883; it reads FIWWFVYSDGGPKLTYSELMNFETCALRETTYPCSIFEDRHPS. A helical transmembrane segment spans residues 884–903; that stretch reads TVAMTVLVVVEMFNALNNLS. A Ca(2+)-binding site is contributed by E894. Over 904–916 the chain is Cytoplasmic; sequence ENQSLLVITPRSN. Residues 917–935 form a helical membrane-spanning segment; the sequence is LWLVGSIILTMLLHVLILY. Over 936-950 the chain is Lumenal; that stretch reads VHPLAVLFSVTPLSW. A helical membrane pass occupies residues 951-971; that stretch reads AEWTAVLYLSFPVIIIDELLK. Topologically, residues 972 to 998 are cytoplasmic; the sequence is FLSRNTGMRFRFRLRKADLLPKDRRDK.

Belongs to the cation transport ATPase (P-type) (TC 3.A.3) family. Type IIA subfamily. Expressed in root cap, in elongation and differentiation zones of roots, in vascular tissues of roots, leaves, floral pedicels and style, in leaves, including hydathodes and guard cells, in stamens, in petals, in sepals and in siliques.

The protein resides in the golgi apparatus membrane. Its subcellular location is the endosome membrane. The protein localises to the prevacuolar compartment membrane. It carries out the reaction Ca(2+)(in) + ATP + H2O = Ca(2+)(out) + ADP + phosphate + H(+). Its function is as follows. This magnesium-dependent enzyme catalyzes the hydrolysis of ATP coupled with the translocation of calcium from the cytosol to an endomembrane compartment. Involved in calcium-enhanced root growth, in tolerance to toxic levels of manganese and in secretory processes. Has a crucial role in manganese nutrition, but is not involved in transporting copper, iron or zinc. The chain is Calcium-transporting ATPase 3, endoplasmic reticulum-type from Arabidopsis thaliana (Mouse-ear cress).